Here is a 285-residue protein sequence, read N- to C-terminus: Transmembrane protein DDB_G0269096 (285 aa).

Disordered stretches follow at residues 1-25 (MEDRNLERNIGSDISSSSSIDMSQS) and 59-87 (SFENGENNNNNNNNNNNNNNNNNNNNNKN). Low complexity-rich tracts occupy residues 12–25 (SDISSSSSIDMSQS) and 65–85 (NNNNNNNNNNNNNNNNNNNNN). The next 5 membrane-spanning stretches (helical) occupy residues 124-144 (LEEIGWTWLASFTGILVLALI), 152-172 (AQMQVLIGSFAASAVIIFGVP), 182-202 (LIMGHFLSAVVGSVIRVALVY), 205-225 (ANFEVACALAVSLSIMLMQFT), and 250-270 (FYFIFVPILSGALIMLLTALV).

It is found in the membrane. This Dictyostelium discoideum (Social amoeba) protein is Transmembrane protein DDB_G0269096.